The following is a 371-amino-acid chain: Diterpene cyclase DtcycA (371 aa).

Asn-234, Ser-238, and Glu-242 together coordinate Mg(2+).

The protein belongs to the terpene synthase family. Homodimer. Requires Mg(2+) as cofactor.

It carries out the reaction (2E,6E,10E)-geranylgeranyl diphosphate = cembrene C + diphosphate. The catalysed reaction is (2E,6E,10E)-geranylgeranyl diphosphate + H2O = (R)-nephthenol + diphosphate. Its function is as follows. Diterpene cyclases that can form multiple diterpene products. The polypeptide is Diterpene cyclase DtcycA (Streptomyces sp).